A 415-amino-acid polypeptide reads, in one-letter code: MSDLQGRKIFKVFNQDFIVDERYTVTKELGQGAYGIVCAAVNNQTSEGVAIKKVTNVFSKKILAKRALREIKLLQHFRGHRNITCLYDMDIPRPDNFNETYLYEELMECDLAAIIRSGQPLTDAHFQSFIYQILCGLKYIHSANVLHRDLKPGNLLVNADCELKICDFGLARGFSVDPEENAGYMTEYVATRWYRAPEIMLSFQSYTKAIDVWSVGCILAELLGGRPFFKGRDYVDQLNQILHILGTPNEETLSRIGSPRAQEYVRNLPFMAKKPFPTLFPNANPDALDLLDRMLAFDPSSRISVEQALEHPYLHIWHDASDEPDCPTTFNFDFEVVEDVGEMRKMILDEVYRFRQLVRTAPGAGGHGAPHAPQVPIPAGAGQGQWKAEDPRPQEYVGQMNDLEAELAGGLDQRR.

The region spanning 23–314 (YTVTKELGQG…VEQALEHPYL (292 aa)) is the Protein kinase domain. ATP-binding positions include 29–37 (LGQGAYGIV) and Lys52. Residues 363-394 (GAGGHGAPHAPQVPIPAGAGQGQWKAEDPRPQ) form a disordered region.

This sequence belongs to the protein kinase superfamily. Ser/Thr protein kinase family. MAP kinase subfamily. As to quaternary structure, interacts with transcription factor MIG1. Interacts with transcription factor SWI6. It depends on Mg(2+) as a cofactor.

The enzyme catalyses L-seryl-[protein] + ATP = O-phospho-L-seryl-[protein] + ADP + H(+). It carries out the reaction L-threonyl-[protein] + ATP = O-phospho-L-threonyl-[protein] + ADP + H(+). In terms of biological role, mitogen-activated protein kinase; part of the MCK1-MKK2-MPS1 MAP kinase (MAPK) signal transduction cascade that is essential for cell wall integrity and plant infection, but not for plant defense responses. Beside its role in pathogenesis, the MPS1 cascade is active in conidiation and cellular stress responses. Targets downstream of the MPS1-MAPK pathway include transcription factors MIG1 and SWI6, as well as GSK1 and MPG1. In Pyricularia oryzae (strain 70-15 / ATCC MYA-4617 / FGSC 8958) (Rice blast fungus), this protein is Mitogen-activated protein kinase MPS1.